The primary structure comprises 250 residues: Superoxide dismutase 1 copper chaperone (250 aa).

An HMA domain is found at 4–67; the sequence is SFEIVFAVPM…AIQSTGKDAI (64 aa). Cu cation is bound by residues C15, C18, C229, and C231.

The protein belongs to the CCS1 family. Requires Cu(2+) as cofactor.

It localises to the cytoplasm. Functionally, copper chaperone for superoxide dismutase 1 (SOD1). Binds copper ions and delivers them specifically to SOD1. This is Superoxide dismutase 1 copper chaperone (CCS1) from Debaryomyces hansenii (strain ATCC 36239 / CBS 767 / BCRC 21394 / JCM 1990 / NBRC 0083 / IGC 2968) (Yeast).